Here is a 599-residue protein sequence, read N- to C-terminus: Elongation factor 4 (599 aa).

The tr-type G domain occupies 2–184 (KNIRNFSIIA…RLVRDIPPPQ (183 aa)). GTP contacts are provided by residues 14–19 (DHGKST) and 131–134 (NKID).

It belongs to the TRAFAC class translation factor GTPase superfamily. Classic translation factor GTPase family. LepA subfamily.

Its subcellular location is the cell inner membrane. The catalysed reaction is GTP + H2O = GDP + phosphate + H(+). Its function is as follows. Required for accurate and efficient protein synthesis under certain stress conditions. May act as a fidelity factor of the translation reaction, by catalyzing a one-codon backward translocation of tRNAs on improperly translocated ribosomes. Back-translocation proceeds from a post-translocation (POST) complex to a pre-translocation (PRE) complex, thus giving elongation factor G a second chance to translocate the tRNAs correctly. Binds to ribosomes in a GTP-dependent manner. The sequence is that of Elongation factor 4 from Salmonella agona (strain SL483).